Consider the following 90-residue polypeptide: DNA-binding protein HU-beta (90 aa).

This sequence belongs to the bacterial histone-like protein family. Heterodimer of an alpha and a beta chain.

In terms of biological role, histone-like DNA-binding protein which is capable of wrapping DNA to stabilize it, and thus to prevent its denaturation under extreme environmental conditions. In Pseudomonas fluorescens (strain ATCC BAA-477 / NRRL B-23932 / Pf-5), this protein is DNA-binding protein HU-beta (hupB).